The primary structure comprises 295 residues: Tissue factor (295 aa).

The signal sequence occupies residues 1–32; it reads METPAWPRVPRPETAVARTLLLGWVFAQVAGA. At 33-251 the chain is on the extracellular side; sequence SGTTNTVAAY…MGQEKGEFRE (219 aa). 2 consecutive short sequence motifs (WKS motif) follow at residues 46 to 48 and 77 to 79; these read WKS. The cysteines at positions 81 and 89 are disulfide-linked. N-linked (GlcNAc...) asparagine glycans are attached at residues N156 and N169. A WKS motif motif is present at residues 190–192; that stretch reads WKS. A disulfide bridge links C218 with C241. Residues 252–274 traverse the membrane as a helical segment; sequence IFYIIGAVVFVVIILVIILAISL. Residues 275-295 lie on the Cytoplasmic side of the membrane; it reads HKCRKAGVGQSWKENSPLNVS. C277 carries the S-palmitoyl cysteine lipid modification.

It belongs to the tissue factor family. Interacts with HSPE; the interaction, inhibited by heparin, promotes the generation of activated factor X and activates coagulation in the presence of activated factor VII. In terms of tissue distribution, lung, placenta and pancreas.

Its subcellular location is the membrane. The protein resides in the secreted. Functionally, initiates blood coagulation by forming a complex with circulating factor VII or VIIa. The [TF:VIIa] complex activates factors IX or X by specific limited proteolysis. TF plays a role in normal hemostasis by initiating the cell-surface assembly and propagation of the coagulation protease cascade. In Homo sapiens (Human), this protein is Tissue factor (F3).